The chain runs to 2376 residues: Protein Ycf2 (2376 aa).

Disordered stretches follow at residues 173–194 (SSQL…GTED), 226–256 (TEIE…EMNN), and 952–1011 (KRKK…KRKE). Over residues 235–245 (KGLSGSSSKSR) the composition is skewed to low complexity. 2 stretches are compositionally biased toward basic and acidic residues: residues 246-255 (LFTEGEKEMN) and 960-1009 (KRKE…PEKR). Residue 1441–1448 (GSIGSGRS) participates in ATP binding. Disordered regions lie at residues 1515–1534 (YEDR…DYEP), 1860–2046 (LVGS…LRPK), and 2112–2230 (PAEE…DGFS). The span at 1866-2025 (TEEEVEGTEE…GEGTEDEEGE (160 aa)) shows a compositional bias: acidic residues. The segment covering 2026 to 2038 (GTEKDSSQFDNDR) has biased composition (basic and acidic residues). Acidic residues-rich tracts occupy residues 2112–2129 (PAEE…EALE) and 2136–2213 (GEEE…ENDS).

It belongs to the Ycf2 family.

Its subcellular location is the plastid. It is found in the chloroplast stroma. Its function is as follows. Probable ATPase of unknown function. Its presence in a non-photosynthetic plant (Epifagus virginiana) and experiments in tobacco indicate that it has an essential function which is probably not related to photosynthesis. This chain is Protein Ycf2, found in Oenothera glazioviana (Large-flowered evening primrose).